The primary structure comprises 842 residues: Histidine biosynthesis trifunctional protein (842 aa).

A phosphoribosyl-AMP cyclohydrolase region spans residues 1-275 (MTFPLLPAYA…FVVEQTGVGF (275 aa)). The segment at 276–357 (CHLERTSCFG…FYFALVRCAK (82 aa)) is phosphoribosyl-ATP pyrophosphohydrolase. The tract at residues 358-842 (YGVTLDEVER…KVRMEKLGLI (485 aa)) is histidinol dehydrogenase. The disordered stretch occupies residues 380–403 (KGDAKPGYTKEQPKEESKPKEVPS). Over residues 390-403 (EQPKEESKPKEVPS) the composition is skewed to basic and acidic residues. Positions 667 and 670 each coordinate Zn(2+). Catalysis depends on residues Glu736 and His737. Asp769 and His828 together coordinate Zn(2+).

In the C-terminal section; belongs to the histidinol dehydrogenase family. Requires Zn(2+) as cofactor.

It carries out the reaction 1-(5-phospho-beta-D-ribosyl)-5'-AMP + H2O = 1-(5-phospho-beta-D-ribosyl)-5-[(5-phospho-beta-D-ribosylamino)methylideneamino]imidazole-4-carboxamide. The enzyme catalyses 1-(5-phospho-beta-D-ribosyl)-ATP + H2O = 1-(5-phospho-beta-D-ribosyl)-5'-AMP + diphosphate + H(+). The catalysed reaction is L-histidinol + 2 NAD(+) + H2O = L-histidine + 2 NADH + 3 H(+). The protein operates within amino-acid biosynthesis; L-histidine biosynthesis; L-histidine from 5-phospho-alpha-D-ribose 1-diphosphate: step 2/9. It functions in the pathway amino-acid biosynthesis; L-histidine biosynthesis; L-histidine from 5-phospho-alpha-D-ribose 1-diphosphate: step 3/9. It participates in amino-acid biosynthesis; L-histidine biosynthesis; L-histidine from 5-phospho-alpha-D-ribose 1-diphosphate: step 9/9. This is Histidine biosynthesis trifunctional protein (HIS4) from Komagataella pastoris (Yeast).